Reading from the N-terminus, the 145-residue chain is UPF0102 protein BAV3162 (145 aa).

This sequence belongs to the UPF0102 family.

The chain is UPF0102 protein BAV3162 from Bordetella avium (strain 197N).